We begin with the raw amino-acid sequence, 2893 residues long: Genome polyprotein (2893 aa).

The disordered stretch occupies residues 206–226 (VQAKPEMDNPNPGPDGEGEVE). In terms of domain architecture, SF3 helicase spans 1446–1612 (SKLKTDLMEM…EEKKRGCKHC (167 aa)). 1472 to 1479 (GASGIGKS) is a binding site for ATP. Residues 2119–2345 (GSTQQVDAAV…VAEPLVHEMF (227 aa)) form the Peptidase C3 domain. Active-site for 3C-like protease activity residues include histidine 2170, asparagine 2227, and cysteine 2307. The RdRp catalytic domain occupies 2633–2763 (THIVTGDYKN…NVSDNMIDKF (131 aa)).

Specific enzymatic cleavages in vivo by the viral 3C-like protease yield three mature proteins. 3C-like protease is cleaved autocatalytically.

The protein resides in the virion. It catalyses the reaction RNA(n) + a ribonucleoside 5'-triphosphate = RNA(n+1) + diphosphate. The enzyme catalyses ATP + H2O = ADP + phosphate + H(+). With respect to regulation, inhibited by Rupintrivir. Its function is as follows. Capsid protein that assembles with the capsid proteins VP1 and VP3 to form a pseudo-T3 icosahedral capsid of about 40 nm. In terms of biological role, capsid protein that assembles with the capsid proteins VP1 and VP2 to form a pseudo T3 icosahedral capsid of about 40 nm. Capsid protein that assembles with the capsid proteins VP2 and VP3 to form a pseudo T3 icosahedral capsid of about 40 nm. Functionally, displays RNA helix destabilizing and strand annealing acceleration activity. This activity is necessary at several points during genome replication, for example to separate duplexes that form after genome replication. Its function is as follows. Cysteine protease that generates mature viral proteins from the precursor polyprotein. In terms of biological role, replicates genomic and antigenomic RNA. In Deformed wing virus (DWV), this protein is Genome polyprotein.